The chain runs to 87 residues: Small ribosomal subunit protein uS17 (87 aa).

Belongs to the universal ribosomal protein uS17 family. In terms of assembly, part of the 30S ribosomal subunit.

Functionally, one of the primary rRNA binding proteins, it binds specifically to the 5'-end of 16S ribosomal RNA. This is Small ribosomal subunit protein uS17 from Neisseria meningitidis serogroup C (strain 053442).